Reading from the N-terminus, the 421-residue chain is 3-isopropylmalate dehydratase large subunit (421 aa).

The [4Fe-4S] cluster site is built by Cys302, Cys362, and Cys365.

Belongs to the aconitase/IPM isomerase family. LeuC type 2 subfamily. Heterodimer of LeuC and LeuD. [4Fe-4S] cluster serves as cofactor.

The enzyme catalyses (2R,3S)-3-isopropylmalate = (2S)-2-isopropylmalate. It participates in amino-acid biosynthesis; L-leucine biosynthesis; L-leucine from 3-methyl-2-oxobutanoate: step 2/4. In terms of biological role, catalyzes the isomerization between 2-isopropylmalate and 3-isopropylmalate, via the formation of 2-isopropylmaleate. This is 3-isopropylmalate dehydratase large subunit from Campylobacter fetus subsp. fetus (strain 82-40).